Consider the following 492-residue polypeptide: ATP synthase subunit beta, chloroplastic (492 aa).

Position 170 to 177 (170 to 177 (GGAGVGKT)) interacts with ATP.

It belongs to the ATPase alpha/beta chains family. F-type ATPases have 2 components, CF(1) - the catalytic core - and CF(0) - the membrane proton channel. CF(1) has five subunits: alpha(3), beta(3), gamma(1), delta(1), epsilon(1). CF(0) has four main subunits: a(1), b(1), b'(1) and c(9-12).

Its subcellular location is the plastid. It localises to the chloroplast thylakoid membrane. The catalysed reaction is ATP + H2O + 4 H(+)(in) = ADP + phosphate + 5 H(+)(out). In terms of biological role, produces ATP from ADP in the presence of a proton gradient across the membrane. The catalytic sites are hosted primarily by the beta subunits. The chain is ATP synthase subunit beta, chloroplastic from Angiopteris lygodiifolia (Turnip fern).